We begin with the raw amino-acid sequence, 496 residues long: Acetyltransferase adrJ (496 aa).

Active-site proton acceptor residues include His174 and Asp421.

It belongs to the plant acyltransferase family. Monomer.

It functions in the pathway secondary metabolite biosynthesis; terpenoid biosynthesis. Functionally, acetyltransferase; part of the gene cluster that mediates the biosynthesis of andrastins, meroterpenoid compounds that exhibit inhibitory activity against ras farnesyltransferase, suggesting that they could be promising leads for antitumor agents. The first step of the pathway is the synthesis of 3,5-dimethylorsellinic acid (DMOA) by the polyketide synthase adrD via condensation of one acetyl-CoA starter unit with 3 malonyl-CoA units and 2 methylations. DMAO is then converted to farnesyl-DMAO by the prenyltransferase adrG. The methyltransferase adrK catalyzes the methylation of the carboxyl group of farnesyl-DMAO to farnesyl-DMAO methyl ester which is further converted to epoxyfarnesyl-DMAO methyl ester by the FAD-dependent monooxygenase adrH. The terpene cyclase adrI then catalyzes the carbon skeletal rearrangement to generate the andrastin E, the first compound in the pathway having the andrastin scaffold, with the tetracyclic ring system. The post-cyclization tailoring enzymes adrF, adrE, adrJ, and adrA, are involved in the conversion of andrastin E into andrastin A. The short chain dehydrogenase adrF is responsible for the oxidation of the C-3 a hydroxyl group of andrastin E to yield the corresponding ketone, andrastin D. The ketoreductase adrE stereoselectively reduces the carbonyl moiety to reverse the stereochemistry of the C-3 position to yield andrastin F. The acetyltransferase adrJ is the acetyltransferase that attaches the acetyl group to the C-3 hydroxyl group of andrastin F to yield andrastin C. Finally, the cytochrome P450 monooxygenase adrA catalyzes two sequential oxidation reactions of the C-23 methyl group, to generate the corresponding alcohol andrastin B, and aldehyde andrastin A. The sequence is that of Acetyltransferase adrJ from Penicillium roqueforti.